The following is a 252-amino-acid chain: Protein IL-40 (252 aa).

Residues 1–18 (MALLQLLLFAMLAACGFS) form the signal peptide. N-linked (GlcNAc...) asparagine glycans are attached at residues Asn-82 and Asn-177.

As to expression, expressed in bone marrow, spleen and lymph node.

Its subcellular location is the secreted. Its function is as follows. Probable B cell-associated cytokine that plays a role in the regulation of humoral immune responses. Involved in lymphocyte B cell development and immunoglobulin/IgA production. The polypeptide is Protein IL-40 (Mus musculus (Mouse)).